Here is a 1578-residue protein sequence, read N- to C-terminus: E3 ubiquitin-protein ligase HECW2 (1578 aa).

Residue Ser48 is modified to Phosphoserine. The region spanning 171–298 (MEGGASGSLH…LERQAGDQML (128 aa)) is the C2 domain. 2 disordered regions span residues 341 to 453 (HTVN…FPTD) and 496 to 802 (IDDG…PSVR). Over residues 386–406 (RTSSTLEIDTEDLISTSSRNS) the composition is skewed to polar residues. Over residues 518-532 (ASIHETASLEERLEN) the composition is skewed to basic and acidic residues. Polar residues predominate over residues 559–576 (SADQGSTELCSSQEVDQP). Low complexity predominate over residues 577-593 (TSGADAGASDTSGGSRR). Polar residues-rich tracts occupy residues 597 to 614 (ETESLDQGSEPSQVSSET), 643 to 664 (SSCNESVTTQLSSVETRCSSLE), and 688 to 708 (PTSSGPAEGSQESVCTPSSLP). 3 stretches are compositionally biased toward low complexity: residues 721-735 (AAEAAALSEQGELGE), 746-755 (AAAAAPAAAA), and 769-782 (AQGACEGATAQEEG). Residues 737–1074 (WQRRGSLEGA…PRPSSTFNTV (338 aa)) form an interaction with TP73 region. One can recognise a WW 1 domain in the interval 813-846 (EALPPNWEARIDSHGRIFYVDHVNRTTTWQRPTA). Positions 853–880 (LQRSNSIQQMEQLNRRYQSIRRTMTNER) form a coiled coil. A phosphoserine mark is found at Ser858 and Ser915. A WW 2 domain is found at 991-1024 (LELPRGWEMKHDHQGKAFFVDHNSRTTTFIDPRL). Disordered stretches follow at residues 1030–1075 (RPTS…NTVS) and 1167–1193 (CQSPRGSPVSSPQNSPGTQRANARAPA). Positions 1037–1046 (HRQHLTRQRS) are enriched in basic residues. Residues 1167–1187 (CQSPRGSPVSSPQNSPGTQRA) show a composition bias toward polar residues. Ser1181 is subject to Phosphoserine. The region spanning 1243 to 1578 (SRKDLQRNKL…VEETSTFGLE (336 aa)) is the HECT domain. Cys1546 serves as the catalytic Glycyl thioester intermediate.

As to quaternary structure, interacts with TP73. Interacts with FZR1.

The protein localises to the cytoplasm. It is found in the cytoskeleton. Its subcellular location is the spindle. The catalysed reaction is S-ubiquitinyl-[E2 ubiquitin-conjugating enzyme]-L-cysteine + [acceptor protein]-L-lysine = [E2 ubiquitin-conjugating enzyme]-L-cysteine + N(6)-ubiquitinyl-[acceptor protein]-L-lysine.. The protein operates within protein modification; protein ubiquitination. Its function is as follows. E3 ubiquitin-protein ligase that mediates ubiquitination of TP73. Acts to stabilize TP73 and enhance activation of transcription by TP73. Involved in the regulation of mitotic metaphase/anaphase transition. The chain is E3 ubiquitin-protein ligase HECW2 (Hecw2) from Mus musculus (Mouse).